Reading from the N-terminus, the 380-residue chain is Cytochrome b (380 aa).

Transmembrane regions (helical) follow at residues 33–53 (FGSLLGACLIIQITTGLFLAM), 77–98 (WMIRHLHANGASMFFICLFLHI), 113–133 (WNIGIILLFTTMMTAFMGYVL), and 178–198 (FFTLHFMLPFIITALTTLHLL). Residues histidine 83 and histidine 97 each coordinate heme b. Heme b is bound by residues histidine 182 and histidine 196. Residue histidine 201 coordinates a ubiquinone. 4 helical membrane passes run 226–246 (IKDILGLLLFLLALMTLTLLS), 288–308 (LGGVMALMLSILILTTIPALH), 320–340 (LSQFLYWLLIADLLILTWIGG), and 347–367 (FITISQVASTLYFTTILLLMP).

Belongs to the cytochrome b family. As to quaternary structure, the cytochrome bc1 complex contains 11 subunits: 3 respiratory subunits (MT-CYB, CYC1 and UQCRFS1), 2 core proteins (UQCRC1 and UQCRC2) and 6 low-molecular weight proteins (UQCRH/QCR6, UQCRB/QCR7, UQCRQ/QCR8, UQCR10/QCR9, UQCR11/QCR10 and a cleavage product of UQCRFS1). This cytochrome bc1 complex then forms a dimer. Heme b is required as a cofactor.

It localises to the mitochondrion inner membrane. Functionally, component of the ubiquinol-cytochrome c reductase complex (complex III or cytochrome b-c1 complex) that is part of the mitochondrial respiratory chain. The b-c1 complex mediates electron transfer from ubiquinol to cytochrome c. Contributes to the generation of a proton gradient across the mitochondrial membrane that is then used for ATP synthesis. This is Cytochrome b (MT-CYB) from Pongo abelii (Sumatran orangutan).